Reading from the N-terminus, the 222-residue chain is Phosphate-specific transport system accessory protein PhoU homolog 1 (222 aa).

It belongs to the PhoU family. In terms of assembly, homodimer.

Its subcellular location is the cytoplasm. Functionally, plays a role in the regulation of phosphate uptake. The polypeptide is Phosphate-specific transport system accessory protein PhoU homolog 1 (phoU1) (Mycobacterium leprae (strain TN)).